The following is a 217-amino-acid chain: Guanylate kinase (217 aa).

One can recognise a Guanylate kinase-like domain in the interval 15–194; that stretch reads GLMLVLSSPS…AYQRLKRILL (180 aa). An ATP-binding site is contributed by 22–29; that stretch reads SPSGAGKT.

Belongs to the guanylate kinase family.

The protein resides in the cytoplasm. It catalyses the reaction GMP + ATP = GDP + ADP. In terms of biological role, essential for recycling GMP and indirectly, cGMP. The polypeptide is Guanylate kinase (Hyphomonas neptunium (strain ATCC 15444)).